We begin with the raw amino-acid sequence, 196 residues long: Metalloproteinase inhibitor 2 (196 aa).

A signal peptide spans 1–2; sequence RA. Residue cysteine 3 coordinates Zn(2+). Involved in metalloproteinase-binding stretches follow at residues 3-6 and 71-72; these read CSCS and SA. Disulfide bonds link cysteine 3-cysteine 74, cysteine 5-cysteine 103, cysteine 15-cysteine 128, cysteine 130-cysteine 177, cysteine 135-cysteine 140, and cysteine 148-cysteine 169. An NTR domain is found at 3–128; it reads CSCSPVHPQQ…SLNHRYQMGC (126 aa).

Belongs to the protease inhibitor I35 (TIMP) family. In terms of assembly, interacts (via the C-terminal) with MMP2 (via the C-terminal PEX domain); the interaction inhibits the MMP2 activity. Post-translationally, the activity of TIMP2 is dependent on the presence of disulfide bonds.

Its subcellular location is the secreted. Functionally, complexes with metalloproteinases (such as collagenases) and irreversibly inactivates them by binding to their catalytic zinc cofactor. This chain is Metalloproteinase inhibitor 2 (TIMP2), found in Cricetulus longicaudatus (Long-tailed dwarf hamster).